Reading from the N-terminus, the 234-residue chain is Sperm flagellar protein 1 (234 aa).

Positions 7–112 (EEALHQLYLW…VLIPLRQRLE (106 aa)) constitute a Calponin-homology (CH) domain. Positions 181-234 (VLQIAEKEQELLASQETVQVLQMKVKRLEHLLQLKNVRIDDLSRRLQQAERKQR) are essential for homodimerization and microtubule bundling activity.

In terms of assembly, homodimer. Interacts with actin, TJP1, CGN and CDH1. As to expression, expressed predominantly in the seminiferous epithelium of adult testis. Expressed in pillar cells of the organ of Corti (at protein level). Expressed in brain, kidney, lung and testis. Highly expressed in the trachea, lung and oviduct.

The protein resides in the cytoplasm. The protein localises to the cell projection. It is found in the cilium. It localises to the flagellum. Its subcellular location is the cytoskeleton. The protein resides in the cilium axoneme. The protein localises to the apical cell membrane. It is found in the basolateral cell membrane. It localises to the stress fiber. Its subcellular location is the microvillus. The protein resides in the lamellipodium. The protein localises to the filopodium. Its function is as follows. Microtubule-associated protein that promotes microtubule bundling and stabilizes microtubules against depolymerization in response to cold shock. Microtubule-associated protein involved in the stabilization of microtubules along the axis of migration during radial intercalation. Promotes the establishment and stabilization of an axis of microtubules required for the active migration of cells into the outer epithelium. Essential for ciliary central apparatus formation which requires both its microtubule-binding and bundling activities and for ciliary localization of HYDIN and SPAG6 in ependymal cilia. Binds actin in intestinal epithelial cells (IECs), essential for IECs survival and contributes to formation of filopodia and lamellipodia in migrating IECs. Regulates planar cell polarity signaling pathway and asymmetric microtubule accumulation in ciliated epithelia. The polypeptide is Sperm flagellar protein 1 (Spef1) (Mus musculus (Mouse)).